Reading from the N-terminus, the 156-residue chain is FAD synthase (156 aa).

ATP contacts are provided by residues 9-10, 14-17, Asn-92, and His-119; these read TF and HPGH.

It belongs to the archaeal FAD synthase family. In terms of assembly, homodimer. The cofactor is a divalent metal cation.

The enzyme catalyses FMN + ATP + H(+) = FAD + diphosphate. It functions in the pathway cofactor biosynthesis; FAD biosynthesis; FAD from FMN: step 1/1. Functionally, catalyzes the transfer of the AMP portion of ATP to flavin mononucleotide (FMN) to produce flavin adenine dinucleotide (FAD) coenzyme. In Methanospirillum hungatei JF-1 (strain ATCC 27890 / DSM 864 / NBRC 100397 / JF-1), this protein is FAD synthase.